A 201-amino-acid chain; its full sequence is MPKISGGKILPIYITGHAVLHAPAKPVTDFSGIQEIVRDMFATMFAAPGVGLAGPQIGLGLRIFVYSYTEGDTLHQGVAINPDLLIPKGVPKRQTHKQQANNSTSCDEPDREGCLSFPGYQFPLERAPQVTLSAFDENKKPFTVHATGWLARIFQHEFDHLQGTLYVDRLAQKYSGEVRQAVLNNKWGIPGKYWVPQEPKE.

Fe cation contacts are provided by Cys114 and His156. Glu157 is an active-site residue. Residue His160 coordinates Fe cation.

The protein belongs to the polypeptide deformylase family. Requires Fe(2+) as cofactor.

It catalyses the reaction N-terminal N-formyl-L-methionyl-[peptide] + H2O = N-terminal L-methionyl-[peptide] + formate. Its function is as follows. Removes the formyl group from the N-terminal Met of newly synthesized proteins. Requires at least a dipeptide for an efficient rate of reaction. N-terminal L-methionine is a prerequisite for activity but the enzyme has broad specificity at other positions. This is Peptide deformylase from Tropheryma whipplei (strain TW08/27) (Whipple's bacillus).